The sequence spans 457 residues: Pancreatic triacylglycerol lipase (457 aa).

A signal peptide spans 1–7 (LLLGAVA). 2 disulfide bridges follow: Cys12/Cys18 and Cys99/Cys110. Ser161 serves as the catalytic Nucleophile. The Charge relay system role is filled by Asp185. The Ca(2+) site is built by Glu196, Arg199, Asp201, and Asp204. A disulfide bridge connects residues Cys246 and Cys270. His272 serves as the catalytic Charge relay system. Disulfide bonds link Cys294-Cys305 and Cys308-Cys313. Residue Asn343 is glycosylated (N-linked (GlcNAc...) asparagine). The region spanning 347–457 (WRYQIAVTLS…EDILLTLTPC (111 aa)) is the PLAT domain. A disulfide bridge links Cys441 with Cys457.

It belongs to the AB hydrolase superfamily. Lipase family. In terms of assembly, forms a 1:1 stoichiometric complex with (pro)colipase/CLPS.

The protein localises to the secreted. It carries out the reaction a triacylglycerol + H2O = a diacylglycerol + a fatty acid + H(+). The catalysed reaction is 1,2,3-tributanoylglycerol + H2O = dibutanoylglycerol + butanoate + H(+). The enzyme catalyses 1,2,3-tri-(9Z-octadecenoyl)-glycerol + H2O = di-(9Z)-octadecenoylglycerol + (9Z)-octadecenoate + H(+). It catalyses the reaction all-trans-retinyl hexadecanoate + H2O = all-trans-retinol + hexadecanoate + H(+). It carries out the reaction 1,2-di-(9Z-octadecenoyl)-glycerol + H2O = (9Z-octadecenoyl)-glycerol + (9Z)-octadecenoate + H(+). With respect to regulation, inhibited by bile salts, is reactivated by (pro)colipase/CLPS. Plays an important role in fat metabolism. It preferentially splits the esters of long-chain fatty acids at positions 1 and 3, producing mainly 2-monoacylglycerol and free fatty acids, and shows considerably higher activity against insoluble emulsified substrates than against soluble ones. The chain is Pancreatic triacylglycerol lipase (PNLIP) from Myocastor coypus (Coypu).